The primary structure comprises 541 residues: Membrane protein insertase YidC (541 aa).

A helical membrane pass occupies residues 6–26; it reads SLLVLALIFISFLVYQQWQLD. The segment at 34-56 is disordered; it reads EQTTSITATSDVPASSPSNSQAI. Transmembrane regions (helical) follow at residues 337–357, 416–436, 454–474, and 495–515; these read FWLLTFIQGIVSNWGLAIICV, LGGCLPILLQMPIFIALYWTF, LSAQDPYYILPILMGISMFLL, and PLVFMFFFLWFPSGLVLYWLV.

It belongs to the OXA1/ALB3/YidC family. Type 1 subfamily. In terms of assembly, interacts with the Sec translocase complex via SecD. Specifically interacts with transmembrane segments of nascent integral membrane proteins during membrane integration.

Its subcellular location is the cell inner membrane. Functionally, required for the insertion and/or proper folding and/or complex formation of integral membrane proteins into the membrane. Involved in integration of membrane proteins that insert both dependently and independently of the Sec translocase complex, as well as at least some lipoproteins. Aids folding of multispanning membrane proteins. In Haemophilus influenzae (strain ATCC 51907 / DSM 11121 / KW20 / Rd), this protein is Membrane protein insertase YidC.